Here is a 315-residue protein sequence, read N- to C-terminus: Protein phosphatase PTC7 homolog fig (315 aa).

The PPM-type phosphatase domain occupies 54-309 (KHSIASAKDN…DDITVILATV (256 aa)). The Mn(2+) site is built by aspartate 86, glycine 87, and aspartate 231.

The protein belongs to the PP2C family. Mg(2+) is required as a cofactor. Requires Mn(2+) as cofactor.

It catalyses the reaction O-phospho-L-seryl-[protein] + H2O = L-seryl-[protein] + phosphate. It carries out the reaction O-phospho-L-threonyl-[protein] + H2O = L-threonyl-[protein] + phosphate. This Drosophila willistoni (Fruit fly) protein is Protein phosphatase PTC7 homolog fig.